The chain runs to 358 residues: Chorismate synthase (358 aa).

An NADP(+)-binding site is contributed by Arg-47. FMN-binding positions include 124-126, 240-241, Gly-284, 299-303, and Arg-325; these read RSS, NA, and KPVAT.

The protein belongs to the chorismate synthase family. Homotetramer. Requires FMNH2 as cofactor.

The catalysed reaction is 5-O-(1-carboxyvinyl)-3-phosphoshikimate = chorismate + phosphate. The protein operates within metabolic intermediate biosynthesis; chorismate biosynthesis; chorismate from D-erythrose 4-phosphate and phosphoenolpyruvate: step 7/7. Catalyzes the anti-1,4-elimination of the C-3 phosphate and the C-6 proR hydrogen from 5-enolpyruvylshikimate-3-phosphate (EPSP) to yield chorismate, which is the branch point compound that serves as the starting substrate for the three terminal pathways of aromatic amino acid biosynthesis. This reaction introduces a second double bond into the aromatic ring system. This Phocaeicola vulgatus (strain ATCC 8482 / DSM 1447 / JCM 5826 / CCUG 4940 / NBRC 14291 / NCTC 11154) (Bacteroides vulgatus) protein is Chorismate synthase.